The chain runs to 233 residues: Syntaxin-52 (233 aa).

The Cytoplasmic segment spans residues 1 to 209 (MASSSDPWMR…NKSMKSGCSC (209 aa)). Positions 137–199 (RQVMREQDEG…RRVQKSLALM (63 aa)) constitute a t-SNARE coiled-coil homology domain. A helical; Anchor for type IV membrane protein membrane pass occupies residues 210-230 (MSMLLSVLGIVGLALVIWLLV). Residues 231 to 233 (KYL) are Vesicular-facing.

The protein belongs to the syntaxin family. As to quaternary structure, interacts either with VTI11 and SYP21, or with VTI11 and SYP22 in the prevacuolar compartment, or with VTI12 and SYP61 in the trans-Golgi network to form t-SNARE complexes. In terms of tissue distribution, expressed in root, leaf, stem, flower and silique.

The protein localises to the golgi apparatus. The protein resides in the trans-Golgi network membrane. Its subcellular location is the prevacuolar compartment membrane. Functionally, vesicle trafficking protein that functions in the secretory pathway. This Arabidopsis thaliana (Mouse-ear cress) protein is Syntaxin-52 (SYP52).